The following is a 43-amino-acid chain: uncharacterized protein (43 aa).

The signal sequence occupies residues 1–16 (MKLLNFILIIFNALKS). A glycan (N-linked (GlcNAc...) asparagine; by host) is linked at asparagine 37.

This is an uncharacterized protein from Acheta domesticus (House cricket).